The primary structure comprises 121 residues: Ribonuclease P protein component (121 aa).

This sequence belongs to the RnpA family. Consists of a catalytic RNA component (M1 or rnpB) and a protein subunit.

It catalyses the reaction Endonucleolytic cleavage of RNA, removing 5'-extranucleotides from tRNA precursor.. In terms of biological role, RNaseP catalyzes the removal of the 5'-leader sequence from pre-tRNA to produce the mature 5'-terminus. It can also cleave other RNA substrates such as 4.5S RNA. The protein component plays an auxiliary but essential role in vivo by binding to the 5'-leader sequence and broadening the substrate specificity of the ribozyme. The polypeptide is Ribonuclease P protein component (Geobacillus thermodenitrificans (strain NG80-2)).